A 112-amino-acid chain; its full sequence is Ferredoxin, plant-type (112 aa).

The region spanning 6 to 97 (YEVFEVLSGQ…DLTIEYFRHV (92 aa)) is the 2Fe-2S ferredoxin-type domain. Positions 41, 46, 49, and 81 each coordinate [2Fe-2S] cluster.

This sequence belongs to the 2Fe2S plant-type ferredoxin family.

Its pathway is aromatic compound metabolism; catechol degradation. Ferredoxins are iron-sulfur proteins that transfer electrons in a wide variety of metabolic reactions. The protein is Ferredoxin, plant-type (xylT) of Pseudomonas putida (Arthrobacter siderocapsulatus).